A 199-amino-acid chain; its full sequence is Protein extra-macrochaetae (199 aa).

The 53-residue stretch at 23–75 folds into the bHLH domain; that stretch reads RIQRHPTHRGDGENAEMKMYLSKLKDLVPFMPKNRKLTKLEIIQHVIDYICDL. At S106 the chain carries Phosphoserine. Residues 127–199 are disordered; it reads RLNAEQPAKV…QNAEKDSRQS (73 aa). A compositionally biased stretch (low complexity) spans 161 to 182; it reads QQHQQQQQLQLQQQQLQSQQQL.

As to quaternary structure, heterodimer with other HLH proteins.

The protein localises to the nucleus. Its function is as follows. Participates in sensory organ patterning by antagonizing the neurogenic activity of the Achaete-scute complex (AS-C). It lacks a basic DNA-binding domain but is able to form heterodimers with other HLH proteins, thereby inhibiting DNA binding. May sequester proneural proteins in complexes inefficient for DNA interaction. EMC also affects vein differentiation. Inhibits the activity of AS-C proteins by forming an non-DNA binding heterodimer. In Drosophila melanogaster (Fruit fly), this protein is Protein extra-macrochaetae (emc).